Consider the following 592-residue polypeptide: Leucine-rich repeat and immunoglobulin-like domain-containing nogo receptor-interacting protein 3 (592 aa).

Residues 1 to 24 (MTCWLCVLSLPLLLLPAAPPPAGG) form the signal peptide. The LRRNT domain occupies 25-54 (CPARCECTVQTRAVACTRRRLTAVPDGIPA). Topologically, residues 25-531 (CPARCECTVQ…LDLTTILVST (507 aa)) are extracellular. LRR repeat units lie at residues 55 to 76 (ETRL…DLAA), 79 to 100 (ALEE…AFAN), 103 to 124 (RLRV…VFTR), 127 to 148 (NLTL…TFQD), 151 to 172 (SLRR…AFAG), 175 to 196 (ALEE…SLGH), 207 to 228 (HLAI…LHLE), 247 to 268 (NLTS…ALRH), 271 to 292 (HLTC…SFRD), 295 to 316 (RLRE…AFLG), and 319 to 340 (QIRL…TFHS). The N-linked (GlcNAc...) asparagine glycan is linked to asparagine 127. A glycan (N-linked (GlcNAc...) asparagine) is linked at asparagine 185. N-linked (GlcNAc...) asparagine glycans are attached at residues asparagine 247, asparagine 257, and asparagine 276. The N-linked (GlcNAc...) asparagine glycan is linked to asparagine 324. The region spanning 352-406 (NPLACDCRLLWIVQRRKTLNFDGRLPACATPAEVRGDALRNLPDSVLFEYFVCRK) is the LRRCT domain. An Ig-like C2-type domain is found at 407–496 (PKIRERRLQR…GNDTYFATLT (90 aa)). Cysteine 429 and cysteine 480 are joined by a disulfide. Asparagine 488 and asparagine 512 each carry an N-linked (GlcNAc...) asparagine glycan. Residues 532–552 (AMGCITFLGVVLFCFVLLFVW) traverse the membrane as a helical segment. At 553-592 (SRGRGQHKNNFSVEYSFRKVDGPAAAAGQGGARKFNMKMI) the chain is on the cytoplasmic side.

The protein resides in the membrane. This Homo sapiens (Human) protein is Leucine-rich repeat and immunoglobulin-like domain-containing nogo receptor-interacting protein 3 (LINGO3).